The sequence spans 272 residues: Ribonuclease 3 (272 aa).

The span at 1–20 (MTDDVTNVEQPSTASEQQPQ) shows a compositional bias: polar residues. A disordered region spans residues 1-38 (MTDDVTNVEQPSTASEQQPQDVPAAEPSAAKKRRANKA). Residues 44-171 (AAAIEQRLGH…VIGAIYLDGG (128 aa)) form the RNase III domain. Glutamate 84 is a Mg(2+) binding site. Residue aspartate 88 is part of the active site. Mg(2+) is bound by residues aspartate 157 and glutamate 160. Glutamate 160 is an active-site residue. The region spanning 196–265 (DPKTVLQEWA…ASAMLAREGV (70 aa)) is the DRBM domain.

The protein belongs to the ribonuclease III family. As to quaternary structure, homodimer. Mg(2+) is required as a cofactor.

It is found in the cytoplasm. It carries out the reaction Endonucleolytic cleavage to 5'-phosphomonoester.. Functionally, digests double-stranded RNA. Involved in the processing of primary rRNA transcript to yield the immediate precursors to the large and small rRNAs (23S and 16S). Processes some mRNAs, and tRNAs when they are encoded in the rRNA operon. Processes pre-crRNA and tracrRNA of type II CRISPR loci if present in the organism. The protein is Ribonuclease 3 of Rhodopseudomonas palustris (strain ATCC BAA-98 / CGA009).